The following is a 454-amino-acid chain: Kynurenine 3-monooxygenase (454 aa).

It belongs to the aromatic-ring hydroxylase family. KMO subfamily. FAD serves as cofactor.

The catalysed reaction is L-kynurenine + NADPH + O2 + H(+) = 3-hydroxy-L-kynurenine + NADP(+) + H2O. It participates in cofactor biosynthesis; NAD(+) biosynthesis; quinolinate from L-kynurenine: step 1/3. Functionally, catalyzes the hydroxylation of L-kynurenine (L-Kyn) to form 3-hydroxy-L-kynurenine (L-3OHKyn). Required for synthesis of quinolinic acid. The chain is Kynurenine 3-monooxygenase from Salinispora arenicola (strain CNS-205).